A 900-amino-acid chain; its full sequence is Translation initiation factor IF-2 (900 aa).

Residues 80–95 (LEEQSRKTVEKEDQLR) show a composition bias toward basic and acidic residues. Disordered stretches follow at residues 80-106 (LEEQSRKTVEKEDQLRDTLQPSPVPGR), 149-169 (AVEAEPEVAPPSLEAEEDSPV), and 221-268 (DEFD…VDEK). Positions 253–262 (GKKKGKKKKK) are enriched in basic residues. The tr-type G domain maps to 397–567 (TRPPVVTIMG…LTEAEVRELK (171 aa)). The interval 406–413 (GHVDHGKT) is G1. Residue 406-413 (GHVDHGKT) participates in GTP binding. A G2 region spans residues 431–435 (GITQH). Residues 453–456 (DTPG) are G3. Residues 453-457 (DTPGH) and 507-510 (NKID) each bind GTP. Residues 507-510 (NKID) are G4. A G5 region spans residues 543–545 (SAK).

It belongs to the TRAFAC class translation factor GTPase superfamily. Classic translation factor GTPase family. IF-2 subfamily.

The protein localises to the cytoplasm. One of the essential components for the initiation of protein synthesis. Protects formylmethionyl-tRNA from spontaneous hydrolysis and promotes its binding to the 30S ribosomal subunits. Also involved in the hydrolysis of GTP during the formation of the 70S ribosomal complex. This Chlorobium phaeovibrioides (strain DSM 265 / 1930) (Prosthecochloris vibrioformis (strain DSM 265)) protein is Translation initiation factor IF-2.